Here is a 146-residue protein sequence, read N- to C-terminus: Large ribosomal subunit protein uL15 (146 aa).

Residues 1 to 54 (MTIKLHDLRPAPGSKTPRTRVGRGEGSKGKTAGRGTKGTKARKQVPTTFEGGQM) form a disordered region.

The protein belongs to the universal ribosomal protein uL15 family. In terms of assembly, part of the 50S ribosomal subunit.

Binds to the 23S rRNA. The protein is Large ribosomal subunit protein uL15 of Mycobacterium marinum (strain ATCC BAA-535 / M).